The following is a 339-amino-acid chain: Homeobox protein DBX2 (339 aa).

Positions 186–245 (GILRRAVFSEDQRKALEKMFQKQKYISKTDRKKLAINLGLKESQVKIWFQNRRMKWRNSK) form a DNA-binding region, homeobox. The segment at 282–318 (VPQQHSSPRWRENSPEPSERLIQESSGAPPPEANSLQ) is disordered. Residues 290–303 (RWRENSPEPSERLI) show a composition bias toward basic and acidic residues.

Belongs to the H2.0 homeobox family.

Its subcellular location is the nucleus. The sequence is that of Homeobox protein DBX2 (DBX2) from Homo sapiens (Human).